The following is a 449-amino-acid chain: UDP-N-acetylmuramate--L-alanine ligase (449 aa).

118–124 (GTHGKTT) serves as a coordination point for ATP.

It belongs to the MurCDEF family.

The protein localises to the cytoplasm. It carries out the reaction UDP-N-acetyl-alpha-D-muramate + L-alanine + ATP = UDP-N-acetyl-alpha-D-muramoyl-L-alanine + ADP + phosphate + H(+). It participates in cell wall biogenesis; peptidoglycan biosynthesis. Its function is as follows. Cell wall formation. The polypeptide is UDP-N-acetylmuramate--L-alanine ligase (Flavobacterium johnsoniae (strain ATCC 17061 / DSM 2064 / JCM 8514 / BCRC 14874 / CCUG 350202 / NBRC 14942 / NCIMB 11054 / UW101) (Cytophaga johnsonae)).